Here is a 295-residue protein sequence, read N- to C-terminus: Acetylglutamate kinase (295 aa).

Residues 66 to 67 (GG), Arg-88, and Asn-193 contribute to the substrate site.

It belongs to the acetylglutamate kinase family. ArgB subfamily.

The protein resides in the cytoplasm. It carries out the reaction N-acetyl-L-glutamate + ATP = N-acetyl-L-glutamyl 5-phosphate + ADP. It functions in the pathway amino-acid biosynthesis; L-arginine biosynthesis; N(2)-acetyl-L-ornithine from L-glutamate: step 2/4. In terms of biological role, catalyzes the ATP-dependent phosphorylation of N-acetyl-L-glutamate. The protein is Acetylglutamate kinase of Rhizobium etli (strain CIAT 652).